The sequence spans 88 residues: MMKQQFFLFLAVIVMISSVIEAGRGREFMSNLKEKLSGVKEKMKNSWNRLTSMSEYACPVIEKWCEDHCQAKNAIGRCENTECKCLSK.

The N-terminal stretch at 1–22 (MMKQQFFLFLAVIVMISSVIEA) is a signal peptide. The BetaSPN-type CS-alpha/beta domain occupies 55 to 88 (EYACPVIEKWCEDHCQAKNAIGRCENTECKCLSK). 3 disulfides stabilise this stretch: C58-C78, C65-C83, and C69-C85.

It belongs to the long chain scorpion toxin family. Class 2 subfamily. Expressed by the venom gland.

The protein resides in the secreted. Its function is as follows. Inhibits voltage-gated potassium channels. The synthetic meucin-24 inhibits the development of P.berghei ookinetes, kills intraerythrocytic P.falciparum, and is cytotoxic to the Drosophila S2 cells at micromolar concentrations. No antibacterial, antifungal and hemolytic activities have been found at micromolar concentrations. The sequence is that of Potassium channel toxin MeuTXKbeta3-meucin-24 from Mesobuthus eupeus (Lesser Asian scorpion).